Consider the following 74-residue polypeptide: Small ribosomal subunit protein uS15 (74 aa).

This sequence belongs to the universal ribosomal protein uS15 family. In terms of assembly, part of the 30S ribosomal subunit. Forms a bridge to the 50S subunit in the 70S ribosome, contacting the 23S rRNA.

Its function is as follows. One of the primary rRNA binding proteins, it binds directly to 16S rRNA where it helps nucleate assembly of the platform of the 30S subunit by binding and bridging several RNA helices of the 16S rRNA. In terms of biological role, forms an intersubunit bridge (bridge B4) with the 23S rRNA of the 50S subunit in the ribosome. This chain is Small ribosomal subunit protein uS15, found in Onion yellows phytoplasma (strain OY-M).